Consider the following 263-residue polypeptide: Lens fiber major intrinsic protein (263 aa).

Residues 1–12 are Cytoplasmic-facing; sequence MWELRSASFWRA. A helical membrane pass occupies residues 13–30; the sequence is IFAEFFATLFYVFFGLGA. Topologically, residues 31 to 40 are extracellular; that stretch reads SLRWAPGPLH. Residues 41–59 traverse the membrane as a helical segment; it reads VLQVALAFGLALATLVQAV. At 60 to 63 the chain is on the cytoplasmic side; it reads GHIS. An intramembrane region (discontinuously helical) is located at residues 64–76; it reads GAHVNPAVTFAFL. The NPA 1 signature appears at 68 to 70; that stretch reads NPA. Over 77–85 the chain is Cytoplasmic; that stretch reads VGSQMSLLR. A helical membrane pass occupies residues 86-106; the sequence is AICYVVAQLLGAVAGAAVLYS. The Extracellular portion of the chain corresponds to 107–126; that stretch reads VTPPAVRGNLALNTLHPGVS. A helical transmembrane segment spans residues 127-147; the sequence is VGQATIVEIFLTLQFVLCIFA. Residues 148-157 lie on the Cytoplasmic side of the membrane; it reads TYDERRNGRL. Residues 158–175 form a helical membrane-spanning segment; it reads GSVALAVGFSLTLGHLFG. At 176–177 the chain is on the extracellular side; the sequence is MY. An intramembrane region (discontinuously helical) is located at residues 178–193; that stretch reads YTGAGMNPARSFAPAI. Positions 184–186 match the NPA 2 motif; that stretch reads NPA. Residues 194 to 200 are Extracellular-facing; it reads LTRNFTN. The helical transmembrane segment at 201-218 threads the bilayer; sequence HWVYWVGPVIGAGLGSLL. Residues 219–263 lie on the Cytoplasmic side of the membrane; the sequence is YDFLLFPRLKSVSERLSILKGTRPSESNGQPEVTGEPVELKTQAL. The segment at 227–237 is interaction with CALM; that stretch reads LKSVSERLSIL. Ser235, Ser243, and Ser245 each carry phosphoserine. The interval 240-263 is disordered; the sequence is TRPSESNGQPEVTGEPVELKTQAL.

It belongs to the MIP/aquaporin (TC 1.A.8) family. Homotetramer; each monomer provides an independent water pore. Two homotetramers on opposing membranes can dimerize, forming a cell-cell junction. Interacts with CALM; the calcium-calmodulin/CALM complex interacts with the cytoplasmic domains of two aquaporins, leading to channel closure. Interacts with BFSP1 (via C-terminus); prevents calcium-dependent inhibition of the water channel activity. Post-translationally, subject to partial proteolytic cleavage in the eye lens core. Partial proteolysis promotes interactions between tetramers from adjoining membranes. Fatty acylated at Met-1 and Lys-238. The acyl modifications, in decreasing order of ion abundance, are: oleoyl (C18:1) &gt; palmitoyl (C16:0) &gt; stearoyl (C18:0) &gt; eicosenoyl (C20:1) &gt; dihomo-gamma-linolenoyl (C20:3) &gt; palmitoleoyl (C16:1) &gt; eicosadienoyl (C20:2). Detected in eye lens (at protein level).

Its subcellular location is the cell membrane. The protein resides in the cell junction. The catalysed reaction is H2O(in) = H2O(out). With respect to regulation, the water channel activity is inhibited by calcium through calmodulin/CALM. In terms of biological role, aquaporins form homotetrameric transmembrane channels, with each monomer independently mediating water transport across the plasma membrane along its osmotic gradient. Specifically expressed in lens fiber cells, this aquaporin is crucial for maintaining lens water homeostasis and transparency. Beyond water permeability, it also acts as a cell-to-cell adhesion molecule, forming thin junctions between lens fiber cells that are essential for maintaining the ordered structure and transparency of the lens. The polypeptide is Lens fiber major intrinsic protein (Ovis aries (Sheep)).